A 426-amino-acid polypeptide reads, in one-letter code: D-tagatose-1,6-bisphosphate aldolase subunit KbaZ (426 aa).

The protein belongs to the GatZ/KbaZ family. KbaZ subfamily. In terms of assembly, forms a complex with KbaY.

It functions in the pathway carbohydrate metabolism; D-tagatose 6-phosphate degradation; D-glyceraldehyde 3-phosphate and glycerone phosphate from D-tagatose 6-phosphate: step 2/2. Functionally, component of the tagatose-1,6-bisphosphate aldolase KbaYZ that is required for full activity and stability of the Y subunit. Could have a chaperone-like function for the proper and stable folding of KbaY. When expressed alone, KbaZ does not show any aldolase activity. The protein is D-tagatose-1,6-bisphosphate aldolase subunit KbaZ of Escherichia coli O157:H7.